The following is a 600-amino-acid chain: Elongation factor 4 (600 aa).

The region spanning 5–187 (KYIRNFSIIA…AIVSKLPPPK (183 aa)) is the tr-type G domain. GTP contacts are provided by residues 17 to 22 (DHGKST) and 134 to 137 (NKLD).

The protein belongs to the TRAFAC class translation factor GTPase superfamily. Classic translation factor GTPase family. LepA subfamily.

The protein localises to the cell inner membrane. The catalysed reaction is GTP + H2O = GDP + phosphate + H(+). Required for accurate and efficient protein synthesis under certain stress conditions. May act as a fidelity factor of the translation reaction, by catalyzing a one-codon backward translocation of tRNAs on improperly translocated ribosomes. Back-translocation proceeds from a post-translocation (POST) complex to a pre-translocation (PRE) complex, thus giving elongation factor G a second chance to translocate the tRNAs correctly. Binds to ribosomes in a GTP-dependent manner. In Rickettsia rickettsii (strain Iowa), this protein is Elongation factor 4.